A 370-amino-acid chain; its full sequence is Histidinol-phosphate aminotransferase 2 (370 aa).

Residue Lys230 is modified to N6-(pyridoxal phosphate)lysine.

The protein belongs to the class-II pyridoxal-phosphate-dependent aminotransferase family. Histidinol-phosphate aminotransferase subfamily. In terms of assembly, homodimer. It depends on pyridoxal 5'-phosphate as a cofactor.

The catalysed reaction is L-histidinol phosphate + 2-oxoglutarate = 3-(imidazol-4-yl)-2-oxopropyl phosphate + L-glutamate. Its pathway is amino-acid biosynthesis; L-histidine biosynthesis; L-histidine from 5-phospho-alpha-D-ribose 1-diphosphate: step 7/9. The chain is Histidinol-phosphate aminotransferase 2 from Pseudomonas fluorescens (strain Pf0-1).